A 517-amino-acid polypeptide reads, in one-letter code: Endoglucanase A (517 aa).

The N-terminal stretch at 1-25 is a signal peptide; that stretch reads MKRSLLKTCSIIAGATIIFSSLSIS. Residue Glu185 is the Proton donor of the active site. Catalysis depends on Glu309, which acts as the Nucleophile. Basic and acidic residues predominate over residues 382–392; the sequence is HPEATEDDKPS. Residues 382 to 424 are disordered; that stretch reads HPEATEDDKPSTDVTNPDSGNTKPDSGNTNPGTETTTPTDNEK. A compositionally biased stretch (polar residues) spans 393 to 407; that stretch reads TDVTNPDSGNTKPDS. Residues 408–420 show a composition bias toward low complexity; the sequence is GNTNPGTETTTPT. One can recognise a CBM2 domain in the interval 416–517; it reads TTTPTDNEKI…VISNFEYKFD (102 aa).

It belongs to the glycosyl hydrolase 5 (cellulase A) family.

The enzyme catalyses Endohydrolysis of (1-&gt;4)-beta-D-glucosidic linkages in cellulose, lichenin and cereal beta-D-glucans.. In terms of biological role, hydrolyzes barley beta-glucan, lichenan, carboxymethylcellulose and xylan. It shows preferential activity against the larger cellooligosaccharides (cellohexaose and cellopentaose); cellotetraose is the smallest substrate degraded completely. This Clostridium longisporum protein is Endoglucanase A (celA).